The chain runs to 413 residues: uncharacterized protein (413 aa).

The first 20 residues, 1-20, serve as a signal peptide directing secretion; it reads MRVIIVIMMVVFVVVGTSSG.

This is an uncharacterized protein from Archaeoglobus fulgidus (strain ATCC 49558 / DSM 4304 / JCM 9628 / NBRC 100126 / VC-16).